The sequence spans 144 residues: Antigenic protein SchS21 (144 aa).

N-linked (GlcNAc...) asparagine glycosylation occurs at Asn36. The interval 91–105 (VKQMWPAESRKPMSG) is igE-binding epitope.

Homodimer. Requires Mg(2+) as cofactor.

Its subcellular location is the secreted. Its function is as follows. Has exodeoxyribonuclease activity with lambda-DNA and salmon testes dsDNA. No activity with circular plasmid DNA. The physiological role of this enzyme may be to degrade environmental DNA, and thus mobilize nitrogen for uptake. The protein is Antigenic protein SchS21 of Stachybotrys chartarum (Toxic black mold).